The primary structure comprises 415 residues: tRNA(Ile2) 2-agmatinylcytidine synthetase TiaS (415 aa).

Belongs to the TiaS family.

Its subcellular location is the cytoplasm. It carries out the reaction cytidine(34) in tRNA(Ile2) + agmatine + ATP + H2O = 2-agmatinylcytidine(34) in tRNA(Ile2) + AMP + 2 phosphate + 2 H(+). Its function is as follows. ATP-dependent agmatine transferase that catalyzes the formation of 2-agmatinylcytidine (agm2C) at the wobble position (C34) of tRNA(Ile2), converting the codon specificity from AUG to AUA. The sequence is that of tRNA(Ile2) 2-agmatinylcytidine synthetase TiaS from Pyrobaculum neutrophilum (strain DSM 2338 / JCM 9278 / NBRC 100436 / V24Sta) (Thermoproteus neutrophilus).